Reading from the N-terminus, the 229-residue chain is Potassium/proton antiporter CemA (229 aa).

Helical transmembrane passes span 11–31 (TTPF…SLFF), 118–138 (IISF…LVIL), 158–178 (LLAL…ELLI), and 190–210 (LLVC…TFNY).

Belongs to the CemA family.

It is found in the plastid. The protein localises to the chloroplast inner membrane. The enzyme catalyses K(+)(in) + H(+)(out) = K(+)(out) + H(+)(in). Its function is as follows. Contributes to K(+)/H(+) antiport activity by supporting proton efflux to control proton extrusion and homeostasis in chloroplasts in a light-dependent manner to modulate photosynthesis. Prevents excessive induction of non-photochemical quenching (NPQ) under continuous-light conditions. Indirectly promotes efficient inorganic carbon uptake into chloroplasts. This is Potassium/proton antiporter CemA from Pelargonium hortorum (Common geranium).